The primary structure comprises 350 residues: Holliday junction branch migration complex subunit RuvB (350 aa).

The large ATPase domain (RuvB-L) stretch occupies residues 1 to 183 (MSAERLVNPH…FVAVHRLVFY (183 aa)). ATP is bound by residues Leu-22, Arg-23, Gly-64, Lys-67, Thr-68, Ser-69, 130-132 (EDF), Arg-173, Tyr-183, and Arg-220. Residue Thr-68 participates in Mg(2+) binding. The small ATPAse domain (RuvB-S) stretch occupies residues 184–254 (SDDAMTEIVS…VARDALAQLE (71 aa)). Residues 257–350 (ELGLDENDRR…ESGPQQATLF (94 aa)) form a head domain (RuvB-H) region. The DNA site is built by Arg-312 and Arg-317. The segment at 331 to 350 (YPERTLPADDESGPQQATLF) is disordered.

The protein belongs to the RuvB family. Homohexamer. Forms an RuvA(8)-RuvB(12)-Holliday junction (HJ) complex. HJ DNA is sandwiched between 2 RuvA tetramers; dsDNA enters through RuvA and exits via RuvB. An RuvB hexamer assembles on each DNA strand where it exits the tetramer. Each RuvB hexamer is contacted by two RuvA subunits (via domain III) on 2 adjacent RuvB subunits; this complex drives branch migration. In the full resolvosome a probable DNA-RuvA(4)-RuvB(12)-RuvC(2) complex forms which resolves the HJ.

The protein resides in the cytoplasm. It carries out the reaction ATP + H2O = ADP + phosphate + H(+). In terms of biological role, the RuvA-RuvB-RuvC complex processes Holliday junction (HJ) DNA during genetic recombination and DNA repair, while the RuvA-RuvB complex plays an important role in the rescue of blocked DNA replication forks via replication fork reversal (RFR). RuvA specifically binds to HJ cruciform DNA, conferring on it an open structure. The RuvB hexamer acts as an ATP-dependent pump, pulling dsDNA into and through the RuvAB complex. RuvB forms 2 homohexamers on either side of HJ DNA bound by 1 or 2 RuvA tetramers; 4 subunits per hexamer contact DNA at a time. Coordinated motions by a converter formed by DNA-disengaged RuvB subunits stimulates ATP hydrolysis and nucleotide exchange. Immobilization of the converter enables RuvB to convert the ATP-contained energy into a lever motion, pulling 2 nucleotides of DNA out of the RuvA tetramer per ATP hydrolyzed, thus driving DNA branch migration. The RuvB motors rotate together with the DNA substrate, which together with the progressing nucleotide cycle form the mechanistic basis for DNA recombination by continuous HJ branch migration. Branch migration allows RuvC to scan DNA until it finds its consensus sequence, where it cleaves and resolves cruciform DNA. This chain is Holliday junction branch migration complex subunit RuvB, found in Chloroflexus aurantiacus (strain ATCC 29366 / DSM 635 / J-10-fl).